The following is a 376-amino-acid chain: Chaperone protein DnaJ (376 aa).

The J domain occupies 5-70 (DYYEVLGVAR…QKRAAYDQFG (66 aa)). Residues 134-212 (GTSVKIKVPT…CHGHGRVEET (79 aa)) form a CR-type zinc finger. Positions 147, 150, 164, 167, 186, 189, 200, and 203 each coordinate Zn(2+). CXXCXGXG motif repeat units lie at residues 147–154 (CTNCGGSG), 164–171 (CNTCGGHG), 186–193 (CPTCRGQG), and 200–207 (CNKCHGHG).

Belongs to the DnaJ family. As to quaternary structure, homodimer. Zn(2+) is required as a cofactor.

The protein localises to the cytoplasm. In terms of biological role, participates actively in the response to hyperosmotic and heat shock by preventing the aggregation of stress-denatured proteins and by disaggregating proteins, also in an autonomous, DnaK-independent fashion. Unfolded proteins bind initially to DnaJ; upon interaction with the DnaJ-bound protein, DnaK hydrolyzes its bound ATP, resulting in the formation of a stable complex. GrpE releases ADP from DnaK; ATP binding to DnaK triggers the release of the substrate protein, thus completing the reaction cycle. Several rounds of ATP-dependent interactions between DnaJ, DnaK and GrpE are required for fully efficient folding. Also involved, together with DnaK and GrpE, in the DNA replication of plasmids through activation of initiation proteins. The sequence is that of Chaperone protein DnaJ from Teredinibacter turnerae (strain ATCC 39867 / T7901).